We begin with the raw amino-acid sequence, 396 residues long: Elongation factor Tu 2 (396 aa).

In terms of domain architecture, tr-type G spans 10–206; the sequence is KPHVNVGTIG…ALDTYIPTPE (197 aa). Residues 19–26 are G1; it reads GHVDHGKT. 19-26 is a binding site for GTP; the sequence is GHVDHGKT. Thr26 serves as a coordination point for Mg(2+). The G2 stretch occupies residues 60–64; it reads GITIN. The interval 81–84 is G3; that stretch reads DCPG. Residues 81-85 and 136-139 contribute to the GTP site; these read DCPGH and NKCD. Residues 136–139 are G4; sequence NKCD. Residues 174–176 form a G5 region; sequence SAK.

It belongs to the TRAFAC class translation factor GTPase superfamily. Classic translation factor GTPase family. EF-Tu/EF-1A subfamily. Monomer.

The protein resides in the cytoplasm. The enzyme catalyses GTP + H2O = GDP + phosphate + H(+). Functionally, GTP hydrolase that promotes the GTP-dependent binding of aminoacyl-tRNA to the A-site of ribosomes during protein biosynthesis. The sequence is that of Elongation factor Tu 2 from Acidovorax sp. (strain JS42).